Reading from the N-terminus, the 310-residue chain is Protein-L-isoaspartate O-methyltransferase (310 aa).

The segment at 1–41 is disordered; sequence MSGERAKRFPLALEDLKRAPRKSEGRPGERQTAGAVPKAAD. Residues 14–29 are compositionally biased toward basic and acidic residues; that stretch reads EDLKRAPRKSEGRPGE. Ser-157 is an active-site residue.

This sequence belongs to the methyltransferase superfamily. L-isoaspartyl/D-aspartyl protein methyltransferase family.

The protein localises to the cytoplasm. It catalyses the reaction [protein]-L-isoaspartate + S-adenosyl-L-methionine = [protein]-L-isoaspartate alpha-methyl ester + S-adenosyl-L-homocysteine. In terms of biological role, catalyzes the methyl esterification of L-isoaspartyl residues in peptides and proteins that result from spontaneous decomposition of normal L-aspartyl and L-asparaginyl residues. It plays a role in the repair and/or degradation of damaged proteins. The chain is Protein-L-isoaspartate O-methyltransferase from Burkholderia cenocepacia (strain HI2424).